Here is a 486-residue protein sequence, read N- to C-terminus: UDP-GalNAc:beta-1,3-N-acetylgalactosaminyltransferase 2 (486 aa).

Residues 1–10 (MRHLLFLCPC) lie on the Cytoplasmic side of the membrane. Residues 11-31 (VIGVAFHLWLFNFSGLFSWFL) form a helical; Signal-anchor for type II membrane protein membrane-spanning segment. The Lumenal segment spans residues 32–486 (VWSPHSYDIV…CGNPCACEDR (455 aa)). N-linked (GlcNAc...) asparagine glycosylation is found at asparagine 103 and asparagine 160.

The protein belongs to the glycosyltransferase 31 family.

It localises to the golgi apparatus membrane. The protein resides in the endoplasmic reticulum. The catalysed reaction is 3-O-(N-acetyl-beta-D-glucosaminyl-(1-&gt;4)-alpha-D-mannosyl)-L-threonyl-[protein] + UDP-N-acetyl-alpha-D-galactosamine = 3-O-[beta-D-GalNAc-(1-&gt;3)-beta-D-GlcNAc-(1-&gt;4)-alpha-D-Man]-L-Thr-[protein] + UDP + H(+). It participates in protein modification; protein glycosylation. In terms of biological role, beta-1,3-N-acetylgalactosaminyltransferase that synthesizes a unique carbohydrate structure, GalNAc-beta-1-3GlcNAc, on N- and O-glycans. Has no galactose nor galactosaminyl transferase activity toward any acceptor substrate. Involved in alpha-dystroglycan (dag1) glycosylation. The protein is UDP-GalNAc:beta-1,3-N-acetylgalactosaminyltransferase 2 (b3galnt2) of Xenopus laevis (African clawed frog).